The following is a 220-amino-acid chain: VQ motif-containing protein 5 (220 aa).

The VQ motif lies at 49 to 57; the sequence is FKSLVQQLT. Disordered stretches follow at residues 61-80 and 131-171; these read PCDR…PEPI and HMMA…GASS. Composition is skewed to polar residues over residues 133 to 150 and 157 to 171; these read MAQS…QSNG and SWFN…GASS.

Its subcellular location is the nucleus. Its function is as follows. May function as negative regulator of plant defense. The polypeptide is VQ motif-containing protein 5 (Arabidopsis thaliana (Mouse-ear cress)).